Here is a 645-residue protein sequence, read N- to C-terminus: Macrolide export ATP-binding/permease protein MacB (645 aa).

The ABC transporter domain maps to 6–244 (IELEGIRRSY…SSIAVVPWQA (239 aa)). Residue 42 to 49 (GASGSGKS) participates in ATP binding. The next 4 membrane-spanning stretches (helical) occupy residues 274–294 (ALTL…MAIG), 526–546 (IAAI…LITV), 574–594 (AVVL…VIGV), and 596–616 (AALL…GALM).

Belongs to the ABC transporter superfamily. Macrolide exporter (TC 3.A.1.122) family. In terms of assembly, homodimer.

It localises to the cell inner membrane. Functionally, non-canonical ABC transporter that contains transmembrane domains (TMD), which form a pore in the inner membrane, and an ATP-binding domain (NBD), which is responsible for energy generation. Confers resistance against macrolides. The polypeptide is Macrolide export ATP-binding/permease protein MacB (Nitrobacter winogradskyi (strain ATCC 25391 / DSM 10237 / CIP 104748 / NCIMB 11846 / Nb-255)).